Reading from the N-terminus, the 275-residue chain is Dermonecrotic toxin SpaSicTox-betaIIA3 (275 aa).

Residue H5 is part of the active site. Mg(2+) is bound by residues E25 and D27. The active-site Nucleophile is the H41. Intrachain disulfides connect C45–C51 and C47–C190. D85 is a Mg(2+) binding site.

Belongs to the arthropod phospholipase D family. Class II subfamily. Mg(2+) serves as cofactor. As to expression, expressed by the venom gland.

It is found in the secreted. It carries out the reaction an N-(acyl)-sphingosylphosphocholine = an N-(acyl)-sphingosyl-1,3-cyclic phosphate + choline. The enzyme catalyses an N-(acyl)-sphingosylphosphoethanolamine = an N-(acyl)-sphingosyl-1,3-cyclic phosphate + ethanolamine. It catalyses the reaction a 1-acyl-sn-glycero-3-phosphocholine = a 1-acyl-sn-glycero-2,3-cyclic phosphate + choline. The catalysed reaction is a 1-acyl-sn-glycero-3-phosphoethanolamine = a 1-acyl-sn-glycero-2,3-cyclic phosphate + ethanolamine. Its function is as follows. Dermonecrotic toxins cleave the phosphodiester linkage between the phosphate and headgroup of certain phospholipids (sphingolipid and lysolipid substrates), forming an alcohol (often choline) and a cyclic phosphate. This toxin acts on sphingomyelin (SM). It may also act on ceramide phosphoethanolamine (CPE), lysophosphatidylcholine (LPC) and lysophosphatidylethanolamine (LPE), but not on lysophosphatidylserine (LPS), and lysophosphatidylglycerol (LPG). It acts by transphosphatidylation, releasing exclusively cyclic phosphate products as second products. Induces dermonecrosis, hemolysis, increased vascular permeability, edema, inflammatory response, and platelet aggregation. This Sicarius patagonicus (Six-eyed sand spider) protein is Dermonecrotic toxin SpaSicTox-betaIIA3.